The chain runs to 123 residues: ATP synthase epsilon chain (123 aa).

Belongs to the ATPase epsilon chain family. In terms of assembly, F-type ATPases have 2 components, CF(1) - the catalytic core - and CF(0) - the membrane proton channel. CF(1) has five subunits: alpha(3), beta(3), gamma(1), delta(1), epsilon(1). CF(0) has three main subunits: a, b and c.

The protein localises to the cell inner membrane. Functionally, produces ATP from ADP in the presence of a proton gradient across the membrane. The protein is ATP synthase epsilon chain of Helicobacter acinonychis (strain Sheeba).